The sequence spans 153 residues: Endoribonuclease YbeY (153 aa).

Positions 114, 118, and 124 each coordinate Zn(2+).

Belongs to the endoribonuclease YbeY family. Requires Zn(2+) as cofactor.

It is found in the cytoplasm. Single strand-specific metallo-endoribonuclease involved in late-stage 70S ribosome quality control and in maturation of the 3' terminus of the 16S rRNA. The polypeptide is Endoribonuclease YbeY (Shewanella putrefaciens (strain CN-32 / ATCC BAA-453)).